The chain runs to 208 residues: Baseplate hub assembly protein gp26 (208 aa).

Positions 1-5 (MYEYK) are excised as a propeptide.

The protein localises to the virion. Functionally, baseplate hub assembly chaperone involved in the tail assembly. The polypeptide is Baseplate hub assembly protein gp26 (26) (Escherichia coli (Bacteriophage T4)).